We begin with the raw amino-acid sequence, 308 residues long: HTH-type transcriptional activator AllS (308 aa).

Residues Phe2–Thr59 enclose the HTH lysR-type domain. A DNA-binding region (H-T-H motif) is located at residues Phe19–Lys38.

It belongs to the LysR transcriptional regulatory family.

Positive regulator essential for the expression of AllD operon. Binds to the AllD promoter. In Escherichia coli O157:H7, this protein is HTH-type transcriptional activator AllS (allS).